The primary structure comprises 332 residues: tRNA N6-adenosine threonylcarbamoyltransferase (332 aa).

His107 and His111 together coordinate Fe cation. Residues 129–133 (LVSGG), Asp162, Gly175, and Asn267 contribute to the substrate site. Asp295 contacts Fe cation.

This sequence belongs to the KAE1 / TsaD family. It depends on Fe(2+) as a cofactor.

Its subcellular location is the cytoplasm. The enzyme catalyses L-threonylcarbamoyladenylate + adenosine(37) in tRNA = N(6)-L-threonylcarbamoyladenosine(37) in tRNA + AMP + H(+). In terms of biological role, required for the formation of a threonylcarbamoyl group on adenosine at position 37 (t(6)A37) in tRNAs that read codons beginning with adenine. Is involved in the transfer of the threonylcarbamoyl moiety of threonylcarbamoyl-AMP (TC-AMP) to the N6 group of A37, together with TsaE and TsaB. TsaD likely plays a direct catalytic role in this reaction. The protein is tRNA N6-adenosine threonylcarbamoyltransferase of Campylobacter hominis (strain ATCC BAA-381 / DSM 21671 / CCUG 45161 / LMG 19568 / NCTC 13146 / CH001A).